Reading from the N-terminus, the 117-residue chain is Large ribosomal subunit protein uL18 (117 aa).

It belongs to the universal ribosomal protein uL18 family. Part of the 50S ribosomal subunit; part of the 5S rRNA/L5/L18/L25 subcomplex. Contacts the 5S and 23S rRNAs.

In terms of biological role, this is one of the proteins that bind and probably mediate the attachment of the 5S RNA into the large ribosomal subunit, where it forms part of the central protuberance. The protein is Large ribosomal subunit protein uL18 of Cronobacter sakazakii (strain ATCC BAA-894) (Enterobacter sakazakii).